A 321-amino-acid chain; its full sequence is D-alanine--D-alanine ligase (321 aa).

One can recognise an ATP-grasp domain in the interval 121 to 315; it reads RSWFLTNNIN…FTNLIEEIIK (195 aa). Residue 147-199 participates in ATP binding; it reads PVKRPYVIKPLTQGSSIGVEVIFEEDDFNFADYNFPYGYQVIIEQYIKGRELQ. Mg(2+) is bound by residues glutamate 268, glutamate 282, and asparagine 284.

This sequence belongs to the D-alanine--D-alanine ligase family. Mg(2+) serves as cofactor. Requires Mn(2+) as cofactor.

It is found in the cytoplasm. The enzyme catalyses 2 D-alanine + ATP = D-alanyl-D-alanine + ADP + phosphate + H(+). The protein operates within cell wall biogenesis; peptidoglycan biosynthesis. Cell wall formation. This chain is D-alanine--D-alanine ligase, found in Rickettsia felis (strain ATCC VR-1525 / URRWXCal2) (Rickettsia azadi).